A 54-amino-acid chain; its full sequence is UPF0391 membrane protein Pfl01_0044 (54 aa).

Helical transmembrane passes span 4–24 and 29–49; these read WAIT…GGIA and GIAK…FFFG.

Belongs to the UPF0391 family.

Its subcellular location is the cell membrane. The chain is UPF0391 membrane protein Pfl01_0044 from Pseudomonas fluorescens (strain Pf0-1).